We begin with the raw amino-acid sequence, 368 residues long: 4-hydroxy-3-methylbut-2-en-1-yl diphosphate synthase (flavodoxin) (368 aa).

Positions 268, 271, 303, and 310 each coordinate [4Fe-4S] cluster.

It belongs to the IspG family. [4Fe-4S] cluster serves as cofactor.

It catalyses the reaction (2E)-4-hydroxy-3-methylbut-2-enyl diphosphate + oxidized [flavodoxin] + H2O + 2 H(+) = 2-C-methyl-D-erythritol 2,4-cyclic diphosphate + reduced [flavodoxin]. It participates in isoprenoid biosynthesis; isopentenyl diphosphate biosynthesis via DXP pathway; isopentenyl diphosphate from 1-deoxy-D-xylulose 5-phosphate: step 5/6. Functionally, converts 2C-methyl-D-erythritol 2,4-cyclodiphosphate (ME-2,4cPP) into 1-hydroxy-2-methyl-2-(E)-butenyl 4-diphosphate. This chain is 4-hydroxy-3-methylbut-2-en-1-yl diphosphate synthase (flavodoxin), found in Listeria monocytogenes serotype 4b (strain F2365).